The sequence spans 463 residues: Tryptophan aminotransferase-related protein 4 (463 aa).

Residues 6–26 (LLLIVSIILNLVFTIHILYYS) form a helical membrane-spanning segment. Residues Tyr-124, 163–164 (TT), Asn-239, 259–262 (DYAY), 282–285 (SLSK), and Arg-293 each bind pyridoxal 5'-phosphate. Residue Lys-285 is modified to N6-(pyridoxal phosphate)lysine.

Belongs to the alliinase family. Pyridoxal 5'-phosphate is required as a cofactor.

The protein localises to the membrane. Functionally, probable aminotransferase. This is Tryptophan aminotransferase-related protein 4 (TAR4) from Arabidopsis thaliana (Mouse-ear cress).